Consider the following 353-residue polypeptide: Photosystem II protein D1 (353 aa).

The residue at position 2 (Thr-2) is an N-acetylthreonine. Thr-2 is modified (phosphothreonine). The next 3 membrane-spanning stretches (helical) occupy residues 29–46 (YIGWFGVLMIPTLLTATS), 118–133 (HFLLGVACYMGREWEL), and 142–156 (WIAVAYSAPVAAATA). His-118 contributes to the chlorophyll a binding site. Tyr-126 lines the pheophytin a pocket. Residues Asp-170 and Glu-189 each coordinate [CaMn4O5] cluster. A helical transmembrane segment spans residues 197 to 218 (FHMLGVAGVFGGSLFSAMHGSL). Residue His-198 participates in chlorophyll a binding. A quinone is bound by residues His-215 and 264–265 (SF). Residue His-215 participates in Fe cation binding. His-272 contacts Fe cation. The chain crosses the membrane as a helical span at residues 274–288 (FLAAWPVVGIWFTAL). Residues His-332, Glu-333, Asp-342, and Ala-344 each contribute to the [CaMn4O5] cluster site. Positions 345–353 (VVEAPSTNG) are excised as a propeptide.

This sequence belongs to the reaction center PufL/M/PsbA/D family. PSII is composed of 1 copy each of membrane proteins PsbA, PsbB, PsbC, PsbD, PsbE, PsbF, PsbH, PsbI, PsbJ, PsbK, PsbL, PsbM, PsbT, PsbX, PsbY, PsbZ, Psb30/Ycf12, at least 3 peripheral proteins of the oxygen-evolving complex and a large number of cofactors. It forms dimeric complexes. It depends on The D1/D2 heterodimer binds P680, chlorophylls that are the primary electron donor of PSII, and subsequent electron acceptors. It shares a non-heme iron and each subunit binds pheophytin, quinone, additional chlorophylls, carotenoids and lipids. D1 provides most of the ligands for the Mn4-Ca-O5 cluster of the oxygen-evolving complex (OEC). There is also a Cl(-1) ion associated with D1 and D2, which is required for oxygen evolution. The PSII complex binds additional chlorophylls, carotenoids and specific lipids. as a cofactor. Tyr-161 forms a radical intermediate that is referred to as redox-active TyrZ, YZ or Y-Z. Post-translationally, C-terminally processed by CTPA; processing is essential to allow assembly of the oxygen-evolving complex and thus photosynthetic growth.

Its subcellular location is the plastid. It is found in the chloroplast thylakoid membrane. The catalysed reaction is 2 a plastoquinone + 4 hnu + 2 H2O = 2 a plastoquinol + O2. Photosystem II (PSII) is a light-driven water:plastoquinone oxidoreductase that uses light energy to abstract electrons from H(2)O, generating O(2) and a proton gradient subsequently used for ATP formation. It consists of a core antenna complex that captures photons, and an electron transfer chain that converts photonic excitation into a charge separation. The D1/D2 (PsbA/PsbD) reaction center heterodimer binds P680, the primary electron donor of PSII as well as several subsequent electron acceptors. In Aethionema grandiflorum (Persian stone-cress), this protein is Photosystem II protein D1.